The sequence spans 306 residues: Agmatinase (306 aa).

Mn(2+) contacts are provided by H126, D149, H151, D153, D230, and D232.

Belongs to the arginase family. Agmatinase subfamily. Mn(2+) serves as cofactor.

It carries out the reaction agmatine + H2O = urea + putrescine. It participates in amine and polyamine biosynthesis; putrescine biosynthesis via agmatine pathway; putrescine from agmatine: step 1/1. In terms of biological role, catalyzes the formation of putrescine from agmatine. In Klebsiella pneumoniae (strain 342), this protein is Agmatinase.